Here is a 343-residue protein sequence, read N- to C-terminus: UDP-3-O-acylglucosamine N-acyltransferase (343 aa).

The active-site Proton acceptor is H248.

It belongs to the transferase hexapeptide repeat family. LpxD subfamily. As to quaternary structure, homotrimer.

The catalysed reaction is a UDP-3-O-[(3R)-3-hydroxyacyl]-alpha-D-glucosamine + a (3R)-hydroxyacyl-[ACP] = a UDP-2-N,3-O-bis[(3R)-3-hydroxyacyl]-alpha-D-glucosamine + holo-[ACP] + H(+). Its pathway is bacterial outer membrane biogenesis; LPS lipid A biosynthesis. Its function is as follows. Catalyzes the N-acylation of UDP-3-O-acylglucosamine using 3-hydroxyacyl-ACP as the acyl donor. Is involved in the biosynthesis of lipid A, a phosphorylated glycolipid that anchors the lipopolysaccharide to the outer membrane of the cell. This chain is UDP-3-O-acylglucosamine N-acyltransferase, found in Microcystis aeruginosa (strain NIES-843 / IAM M-2473).